The sequence spans 114 residues: Ribonuclease P protein component (114 aa).

It belongs to the RnpA family. In terms of assembly, consists of a catalytic RNA component (M1 or rnpB) and a protein subunit.

The enzyme catalyses Endonucleolytic cleavage of RNA, removing 5'-extranucleotides from tRNA precursor.. In terms of biological role, RNaseP catalyzes the removal of the 5'-leader sequence from pre-tRNA to produce the mature 5'-terminus. It can also cleave other RNA substrates such as 4.5S RNA. The protein component plays an auxiliary but essential role in vivo by binding to the 5'-leader sequence and broadening the substrate specificity of the ribozyme. The chain is Ribonuclease P protein component from Borrelia hermsii (strain HS1 / DAH).